The following is a 343-amino-acid chain: GTPase Obg (343 aa).

Positions 1–159 constitute an Obg domain; the sequence is MKFLDQAKIY…RWVWLRLKLI (159 aa). The OBG-type G domain maps to 160–328; it reads ADAGLVGLPN…LLRQVMTYVA (169 aa). Residues 166 to 173, 191 to 195, 213 to 216, 280 to 283, and 309 to 311 contribute to the GTP site; these read GLPNAGKS, FTTLH, DIPG, NKCD, and SGV. Mg(2+) is bound by residues S173 and T193.

Belongs to the TRAFAC class OBG-HflX-like GTPase superfamily. OBG GTPase family. As to quaternary structure, monomer. It depends on Mg(2+) as a cofactor.

It localises to the cytoplasm. An essential GTPase which binds GTP, GDP and possibly (p)ppGpp with moderate affinity, with high nucleotide exchange rates and a fairly low GTP hydrolysis rate. Plays a role in control of the cell cycle, stress response, ribosome biogenesis and in those bacteria that undergo differentiation, in morphogenesis control. This is GTPase Obg from Granulibacter bethesdensis (strain ATCC BAA-1260 / CGDNIH1).